Here is a 293-residue protein sequence, read N- to C-terminus: GTPase Era (293 aa).

Positions 3 to 170 constitute an Era-type G domain; sequence KSGFITIIGR…VELMVKYMPE (168 aa). Residues 11–18 form a G1 region; it reads GRPNVGKS. A GTP-binding site is contributed by 11 to 18; sequence GRPNVGKS. The tract at residues 37–41 is G2; it reads QTTRN. The interval 58–61 is G3; that stretch reads DTPG. Residues 58-62 and 120-123 each bind GTP; these read DTPGI and NKID. The segment at 120–123 is G4; it reads NKID. Residues 149–151 form a G5 region; it reads ISA. The region spanning 201–278 is the KH type-2 domain; sequence LSKEVPHGIA…YLEVWVKVKK (78 aa).

This sequence belongs to the TRAFAC class TrmE-Era-EngA-EngB-Septin-like GTPase superfamily. Era GTPase family. In terms of assembly, monomer.

The protein localises to the cytoplasm. Its subcellular location is the cell membrane. An essential GTPase that binds both GDP and GTP, with rapid nucleotide exchange. Plays a role in 16S rRNA processing and 30S ribosomal subunit biogenesis and possibly also in cell cycle regulation and energy metabolism. This is GTPase Era from Clostridium kluyveri (strain NBRC 12016).